The following is a 1551-amino-acid chain: Envelopment polyprotein (1551 aa).

Positions 1 to 17 (MSKRVLIIAVVVYLVFT) are cleaved as a signal peptide. Residues 18–546 (TQNQITGNHT…CRMSSRPTVA (529 aa)) lie on the Lumenal side of the membrane. Positions 24–66 (GNHTTINSSSPSTTEASSTPTVSRTPQTTTTSTAVSTTITATT) are disordered. N-linked (GlcNAc...) asparagine; by host glycosylation is found at N25 and N30. Residues 31 to 66 (SSSPSTTEASSTPTVSRTPQTTTTSTAVSTTITATT) show a composition bias toward low complexity. 3 N-linked (GlcNAc...) asparagine; by host glycosylation sites follow: N80, N142, and N413. Residues 547 to 567 (LLLGIWIGCGYILTCIFSFLL) form a helical membrane-spanning segment. Topologically, residues 568–675 (YHLILFFANC…ISVGIFLKRT (108 aa)) are cytoplasmic. Residues 676 to 696 (TWLVVLLVLLGLAISPVQGAP) form a helical membrane-spanning segment. At 697 to 704 (TEVSNVKQ) the chain is on the lumenal side. Residues 705 to 725 (DGDYSICYFIFGCLVTAALLL) traverse the membrane as a helical segment. Over 726-823 (KVKRTNSNGI…REKLFTTGLQ (98 aa)) the chain is Cytoplasmic. A helical transmembrane segment spans residues 824–844 (LFINKTNVVVFALIMCFLLLL). The Lumenal portion of the chain corresponds to 845-1451 (TGHNASAFDS…GDFFKHYIGS (607 aa)). N-linked (GlcNAc...) asparagine; by host glycans are attached at residues N848, N1201, N1258, and N1420. A disulfide bridge connects residues C1023 and C1216. A helical membrane pass occupies residues 1452-1472 (IAVGVLGTVLPFALLILFFIY). Over 1473–1551 (GDKMLWPFKV…KKEKKLSEIA (79 aa)) the chain is Cytoplasmic.

This sequence belongs to the nairovirus envelope glycoprotein family. In terms of assembly, heterodimer with glycoprotein C; in prefusion state. As to quaternary structure, heterodimer with glycoprotein N; in prefusion state. Homotrimeric; in postfusion state. Specific enzymatic cleavage by host MBTPS1/S1P/SKI-1 endopeptidase yield glycoprotein N. Specific enzymatic cleavages by host furin-like protease and MBTPS1/S1P endopeptidase yield GP38. Post-translationally, glycosylated.

The protein resides in the host endoplasmic reticulum membrane. It is found in the virion membrane. The protein localises to the host Golgi apparatus membrane. Functionally, glycoprotein N and glycoprotein C interact with each other and are present at the surface of the virion. Glycoprotein N probably locks the Gn-Gc complex in a prefusion state. Glycoprotein N and glycoprotein C are able to attach the virion to host cell receptors. This attachment induces virion internalization predominantly through clathrin-dependent endocytosis. Its function is as follows. Glycoprotein C and glycoprotein N interact with each other and are present at the surface of the virion. The spikes at the surface of the virion are formed by an N-terminal extension of glycoprotein C. Glycoprotein N and glycoprotein C are able to attach the virion to host cell receptors. This attachment induces virion internalization predominantly through clathrin-dependent endocytosis. Class II fusion protein that promotes fusion of viral membrane with host endosomal membrane after endocytosis of the virion. Exposure to potassium is necessary for the conformational change leading to fusion. The chain is Envelopment polyprotein (GP) from Amblyomma variegatum (Tropical bont tick).